Reading from the N-terminus, the 479-residue chain is Heparin cofactor 2 (479 aa).

A signal peptide spans 1-23 (MKHPAYTLLLSLIMSMCAGSKGL). The N-linked (GlcNAc...) asparagine glycan is linked to N31. Tandem repeats lie at residues 55-65 (GEEDDDYLDLE) and 69-79 (SEDDDYIYVVD). The segment at 55 to 79 (GEEDDDYLDLEKLLSEDDDYIYVVD) is 2 X 11 AA approximate repeats, Asp/Glu-rich (acidic) (hirudin-like). Residues Y61 and Y74 each carry the sulfotyrosine modification. N168 carries N-linked (GlcNAc...) asparagine glycosylation. The segment at 172-192 (KYEVTTIHNLFRKLTHRLFRR) is glycosaminoglycan-binding site. N367 and N403 each carry an N-linked (GlcNAc...) asparagine glycan.

The protein belongs to the serpin family. Post-translationally, different composition of the N-linked oligosaccharides appears to yield a 68-kDa and a 72-kDa form.

In terms of biological role, thrombin inhibitor activated by the glycosaminoglycans, heparin or dermatan sulfate. In the presence of the latter, HC-II becomes the predominant thrombin inhibitor in place of antithrombin III (AT). In Rattus norvegicus (Rat), this protein is Heparin cofactor 2 (Serpind1).